The following is a 142-amino-acid chain: Putative regulator of rDNA transcription protein 16 (142 aa).

3 helical membrane-spanning segments follow: residues 19–39 (ILLT…VMVA), 84–104 (FLLF…AIFL), and 111–131 (SIFI…GLCH).

Its subcellular location is the membrane. Identified in a screen for mutants with decreased levels of rDNA transcription. The protein is Putative regulator of rDNA transcription protein 16 (RRT16) of Saccharomyces cerevisiae (strain ATCC 204508 / S288c) (Baker's yeast).